Reading from the N-terminus, the 125-residue chain is Small ribosomal subunit protein uS13 (125 aa).

The segment at 92–125 (RRSLPVRGQNTQTNARTRKGKRKTVAGKKKAARK) is disordered. The span at 107 to 125 (RTRKGKRKTVAGKKKAARK) shows a compositional bias: basic residues.

This sequence belongs to the universal ribosomal protein uS13 family. Part of the 30S ribosomal subunit. Forms a loose heterodimer with protein S19. Forms two bridges to the 50S subunit in the 70S ribosome.

In terms of biological role, located at the top of the head of the 30S subunit, it contacts several helices of the 16S rRNA. In the 70S ribosome it contacts the 23S rRNA (bridge B1a) and protein L5 of the 50S subunit (bridge B1b), connecting the 2 subunits; these bridges are implicated in subunit movement. Contacts the tRNAs in the A and P-sites. The protein is Small ribosomal subunit protein uS13 of Chlorobium luteolum (strain DSM 273 / BCRC 81028 / 2530) (Pelodictyon luteolum).